A 366-amino-acid polypeptide reads, in one-letter code: Phenylalanine--tRNA ligase alpha subunit (366 aa).

Residue Glu-259 coordinates Mg(2+).

This sequence belongs to the class-II aminoacyl-tRNA synthetase family. Phe-tRNA synthetase alpha subunit type 1 subfamily. As to quaternary structure, tetramer of two alpha and two beta subunits. Mg(2+) serves as cofactor.

The protein localises to the cytoplasm. It carries out the reaction tRNA(Phe) + L-phenylalanine + ATP = L-phenylalanyl-tRNA(Phe) + AMP + diphosphate + H(+). This Erythrobacter litoralis (strain HTCC2594) protein is Phenylalanine--tRNA ligase alpha subunit.